The primary structure comprises 146 residues: Thyroid hormone-inducible hepatic protein (146 aa).

The interval 83–104 (KVAGSEENGTAETEEVEDESAS) is disordered. Acidic residues predominate over residues 94-104 (ETEEVEDESAS).

It belongs to the SPOT14 family. In terms of assembly, homodimer. Heterodimer with MID1IP1. Interacts with THRB and PLAGL1. In terms of tissue distribution, mainly expressed in tissues that synthesize triglycerides.

It localises to the nucleus. Its subcellular location is the cytoplasm. Plays a role in the regulation of lipogenesis, especially in lactating mammary gland. Important for the biosynthesis of triglycerides with medium-length fatty acid chains. May modulate lipogenesis by interacting with MID1IP1 and preventing its interaction with ACACA. May function as transcriptional coactivator. May modulate the transcription factor activity of THRB. This Homo sapiens (Human) protein is Thyroid hormone-inducible hepatic protein (THRSP).